The chain runs to 246 residues: Ly6/PLAUR domain-containing protein 4 (246 aa).

An N-terminal signal peptide occupies residues 1–26 (MGPQHLSPMQLLCLLGAISSLPWAEA). Asparagine 117 carries an N-linked (GlcNAc...) asparagine glycan. Positions 142 to 223 (CPTCVGEHSK…INIVEKALFT (82 aa)) constitute a UPAR/Ly6 domain. Alanine 225 is lipidated: GPI-anchor amidated alanine. A propeptide spans 226–246 (GTPCRSPSWGILLGLLFAFKG) (removed in mature form).

It is found in the cell membrane. The polypeptide is Ly6/PLAUR domain-containing protein 4 (LYPD4) (Bos taurus (Bovine)).